The sequence spans 335 residues: Ankyrin repeat and SOCS box protein 1 (335 aa).

6 ANK repeats span residues 36–68, 77–106, 110–139, 143–172, 191–220, and 235–265; these read CEDTRLHDAAYVGDLQTLRSLLQEESYRSRINE, LPCTPLRIAATAGHGSCVDFLIRKGAEVDL, KGQTALYVAVVNGHLESTQILLEAGADPNG, HRSTPVYHASRVGRADILKALIRYGADVDV, LVVCPLYISAAYHNLQCFRLLLLAGANPDF, and SPGCVMDAVLRHGCEAAFVSLLVEFGANLNL. The 50-residue stretch at 286-335 folds into the SOCS box domain; that stretch reads LQVFKEARSVPRTLLCLCRVAVRRALGKHRLHLIPSLPLPDPIKKFLLHE.

Belongs to the ankyrin SOCS box (ASB) family. In terms of assembly, interacts with CUL5 and RNF7. Interacts with TAB2 and TAB3.

Its subcellular location is the cytoplasm. It participates in protein modification; protein ubiquitination. Its function is as follows. Probable substrate-recognition component of a SCF-like ECS (Elongin-Cullin-SOCS-box protein) E3 ligase complex which mediates the ubiquitination and subsequent proteasomal degradation of target proteins. Mediates Notch-induced ubiquitination and degradation of TCF3/E2A and JAK2. Functions as a tumor suppressor by enhancing CHCHD3 'Lys-48'-linked ubiquitination, leading to inhibition of the CHCHD3/ROS signaling pathway. Suppresses TAB2-linked 'Lys-48' polyubiquitination and consequently facilitates the initiation of NF-kappa-B and MAPK signaling cascades. May play a role in testis development. The chain is Ankyrin repeat and SOCS box protein 1 (ASB1) from Homo sapiens (Human).